The primary structure comprises 179 residues: MKHKNGFNPLSRTTAHRRALHRNMVTSLFKYERITTTKQKAMEVRRTAEKLITRSKVDTFNNRRHAAKYIWDDDIVKKLFSDIGPRMKDRNGGYTRILKIGFREGDAADVAILELVDYDFEKKEKDTKKKDDSKKSDDKKTSKKEAGFKSSKGESEHKKNTDQVVDSSSNRRYNRVKGS.

The segment covering 123-161 has biased composition (basic and acidic residues); it reads KEKDTKKKDDSKKSDDKKTSKKEAGFKSSKGESEHKKNT. Residues 123–179 are disordered; it reads KEKDTKKKDDSKKSDDKKTSKKEAGFKSSKGESEHKKNTDQVVDSSSNRRYNRVKGS. The segment covering 162 to 171 has biased composition (polar residues); the sequence is DQVVDSSSNR.

The protein belongs to the bacterial ribosomal protein bL17 family. Part of the 50S ribosomal subunit. Contacts protein L32.

The chain is Large ribosomal subunit protein bL17 from Treponema denticola (strain ATCC 35405 / DSM 14222 / CIP 103919 / JCM 8153 / KCTC 15104).